The chain runs to 369 residues: Developmentally-regulated G-protein 3 (369 aa).

The 226-residue stretch at 66 to 291 (SRVGLVGFPS…LLDKIWEYLD (226 aa)) folds into the OBG-type G domain. Residues 72–79 (GFPSVGKS), 118–122 (DLPGI), and 249–252 (NKID) each bind GTP. A TGS domain is found at 291 to 367 (DLTRIYTKPK…EDEDVVQIVK (77 aa)).

The protein belongs to the TRAFAC class OBG-HflX-like GTPase superfamily. OBG GTPase family.

Its function is as follows. Binds GDP and GTP, and has low GTPase activity in vitro. The chain is Developmentally-regulated G-protein 3 (DRG3) from Arabidopsis thaliana (Mouse-ear cress).